The sequence spans 206 residues: Thymidylate kinase (206 aa).

10 to 17 (GVDGVGKT) is an ATP binding site.

The protein belongs to the thymidylate kinase family.

The catalysed reaction is dTMP + ATP = dTDP + ADP. In terms of biological role, phosphorylation of dTMP to form dTDP in both de novo and salvage pathways of dTTP synthesis. The chain is Thymidylate kinase from Bifidobacterium longum (strain DJO10A).